The primary structure comprises 168 residues: Zinc-finger homeodomain protein 14 (168 aa).

The segment at 7–51 (YRECMRNHAAKLGSYAIDGCREYSQPSTGDLCVACGCHRSYHRRI) adopts a ZF-HD dimerization-type; degenerate zinc-finger fold. Positions 76 to 103 (ARLKWKTAEERNEEEEDDTEETSTEEKM) form a coiled coil. Positions 82-112 (TAEERNEEEEDDTEETSTEEKMTVQRRRKSK) are disordered. Over residues 86 to 98 (RNEEEEDDTEETS) the composition is skewed to acidic residues. A DNA-binding region (homeobox) is located at residues 106–168 (QRRRKSKFTA…WVNNNKKFYH (63 aa)).

Homo- and heterodimer with other ZFHD proteins. Interacts with ZHD11. As to expression, mostly expressed in flowers and stems.

Its subcellular location is the nucleus. Its function is as follows. Putative transcription factor. The chain is Zinc-finger homeodomain protein 14 (ZHD14) from Arabidopsis thaliana (Mouse-ear cress).